The sequence spans 249 residues: Glutathione S-transferase S1 (249 aa).

The segment covering 1–38 (MADEAQAPPAEGAPPAEGEAPPPAEGAEGAVEGGEAAP) has biased composition (low complexity). The interval 1 to 42 (MADEAQAPPAEGAPPAEGEAPPPAEGAEGAVEGGEAAPPAEP) is disordered. Residues 48–125 (HSYTLFYFNV…FLAKTVGLCG (78 aa)) enclose the GST N-terminal domain. Glutathione-binding positions include tyrosine 54, tryptophan 85, lysine 89, 96–97 (QM), and 109–110 (QS). One can recognise a GST C-terminal domain in the interval 127 to 249 (TPWEDLQIDI…WIEKRPVTEV (123 aa)).

This sequence belongs to the GST superfamily. Sigma family. In terms of assembly, homodimer.

The enzyme catalyses RX + glutathione = an S-substituted glutathione + a halide anion + H(+). Its function is as follows. Conjugation of reduced glutathione to a wide number of exogenous and endogenous hydrophobic electrophiles. May be involved in the detoxification of metabolites produced during cellular division and morphogenesis. In Drosophila melanogaster (Fruit fly), this protein is Glutathione S-transferase S1.